The sequence spans 89 residues: Small ribosomal subunit protein bS16 (89 aa).

It belongs to the bacterial ribosomal protein bS16 family.

The chain is Small ribosomal subunit protein bS16 from Geobacillus stearothermophilus (Bacillus stearothermophilus).